A 494-amino-acid polypeptide reads, in one-letter code: Guanosine-5'-triphosphate,3'-diphosphate pyrophosphatase (494 aa).

The protein belongs to the GppA/Ppx family. GppA subfamily.

It catalyses the reaction guanosine 3'-diphosphate 5'-triphosphate + H2O = guanosine 3',5'-bis(diphosphate) + phosphate + H(+). It participates in purine metabolism; ppGpp biosynthesis; ppGpp from GTP: step 2/2. In terms of biological role, catalyzes the conversion of pppGpp to ppGpp. Guanosine pentaphosphate (pppGpp) is a cytoplasmic signaling molecule which together with ppGpp controls the 'stringent response', an adaptive process that allows bacteria to respond to amino acid starvation, resulting in the coordinated regulation of numerous cellular activities. In Shigella dysenteriae serotype 1 (strain Sd197), this protein is Guanosine-5'-triphosphate,3'-diphosphate pyrophosphatase.